Reading from the N-terminus, the 156-residue chain is 6,7-dimethyl-8-ribityllumazine synthase (156 aa).

Residues phenylalanine 23, alanine 57 to glutamate 59, and alanine 81 to isoleucine 83 contribute to the 5-amino-6-(D-ribitylamino)uracil site. Serine 86–threonine 87 is a binding site for (2S)-2-hydroxy-3-oxobutyl phosphate. Histidine 89 serves as the catalytic Proton donor. Phenylalanine 114 is a binding site for 5-amino-6-(D-ribitylamino)uracil. Arginine 128 is a (2S)-2-hydroxy-3-oxobutyl phosphate binding site.

The protein belongs to the DMRL synthase family.

The enzyme catalyses (2S)-2-hydroxy-3-oxobutyl phosphate + 5-amino-6-(D-ribitylamino)uracil = 6,7-dimethyl-8-(1-D-ribityl)lumazine + phosphate + 2 H2O + H(+). It functions in the pathway cofactor biosynthesis; riboflavin biosynthesis; riboflavin from 2-hydroxy-3-oxobutyl phosphate and 5-amino-6-(D-ribitylamino)uracil: step 1/2. Its function is as follows. Catalyzes the formation of 6,7-dimethyl-8-ribityllumazine by condensation of 5-amino-6-(D-ribitylamino)uracil with 3,4-dihydroxy-2-butanone 4-phosphate. This is the penultimate step in the biosynthesis of riboflavin. The chain is 6,7-dimethyl-8-ribityllumazine synthase from Brachyspira hyodysenteriae (strain ATCC 49526 / WA1).